A 197-amino-acid polypeptide reads, in one-letter code: Holliday junction branch migration complex subunit RuvA (197 aa).

Residues 1 to 64 (MYEYIKGTYM…EDFIGLYGFG (64 aa)) form a domain I region. Residues 65–143 (SKEELELFNK…VNLDEGIQTD (79 aa)) are domain II. Positions 144–149 (SNDIKV) are flexible linker. Positions 149-197 (VSSKILEEAKEALMSLGYSEKECEKALKNVEEKESLEIIIKESLKFLMN) are domain III.

The protein belongs to the RuvA family. Homotetramer. Forms an RuvA(8)-RuvB(12)-Holliday junction (HJ) complex. HJ DNA is sandwiched between 2 RuvA tetramers; dsDNA enters through RuvA and exits via RuvB. An RuvB hexamer assembles on each DNA strand where it exits the tetramer. Each RuvB hexamer is contacted by two RuvA subunits (via domain III) on 2 adjacent RuvB subunits; this complex drives branch migration. In the full resolvosome a probable DNA-RuvA(4)-RuvB(12)-RuvC(2) complex forms which resolves the HJ.

The protein resides in the cytoplasm. Its function is as follows. The RuvA-RuvB-RuvC complex processes Holliday junction (HJ) DNA during genetic recombination and DNA repair, while the RuvA-RuvB complex plays an important role in the rescue of blocked DNA replication forks via replication fork reversal (RFR). RuvA specifically binds to HJ cruciform DNA, conferring on it an open structure. The RuvB hexamer acts as an ATP-dependent pump, pulling dsDNA into and through the RuvAB complex. HJ branch migration allows RuvC to scan DNA until it finds its consensus sequence, where it cleaves and resolves the cruciform DNA. The protein is Holliday junction branch migration complex subunit RuvA of Hathewaya histolytica (Clostridium histolyticum).